We begin with the raw amino-acid sequence, 539 residues long: Chaperonin GroEL (539 aa).

ATP-binding positions include Thr29–Pro32, Asp86–Thr90, Gly413, Asn476–Ala478, and Asp492.

Belongs to the chaperonin (HSP60) family. In terms of assembly, forms a cylinder of 14 subunits composed of two heptameric rings stacked back-to-back. Interacts with the co-chaperonin GroES.

It localises to the cytoplasm. The enzyme catalyses ATP + H2O + a folded polypeptide = ADP + phosphate + an unfolded polypeptide.. Its function is as follows. Together with its co-chaperonin GroES, plays an essential role in assisting protein folding. The GroEL-GroES system forms a nano-cage that allows encapsulation of the non-native substrate proteins and provides a physical environment optimized to promote and accelerate protein folding. The polypeptide is Chaperonin GroEL (Leuconostoc mesenteroides subsp. mesenteroides (strain ATCC 8293 / DSM 20343 / BCRC 11652 / CCM 1803 / JCM 6124 / NCDO 523 / NBRC 100496 / NCIMB 8023 / NCTC 12954 / NRRL B-1118 / 37Y)).